We begin with the raw amino-acid sequence, 139 residues long: Non-structural protein 1 (139 aa).

The DLNP; interaction with MAP1B signature appears at Asp-136–Ser-139.

This sequence belongs to the pneumovirus non-structural protein 1 family. In terms of assembly, monomer. Homomultimer. Heteromultimer with NS2. Interacts with the matrix protein M. Interacts with host ELOC and CUL2; this interaction allows NS1 to form an active E3 ligase with ELOC and CUL2. Interacts with host IRF3; this interaction leads to the disrupted association of IRF3 with CREBBP and thus reduced binding of IRF3 to the IFN-beta promoter. Interacts with host MAVS; this interaction prevents MAVS binding to RIGI and inhibits signaling pathway leading to interferon production. Interacts with host MAP1B/microtubule-associated protein 1B. Interacts with host TRIM25 (via SPRY domain); this interaction suppresses RIGI ubiquitination and results in decreased interaction between RIGI and MAVS.

The protein resides in the host cytoplasm. It localises to the host mitochondrion. Its subcellular location is the host nucleus. Functionally, plays a major role in antagonizing the type I IFN-mediated antiviral response by degrading or inhibiting multiple cellular factors required for either IFN induction or response pathways. Acts cooperatively with NS2 to repress activation and nuclear translocation of host IFN-regulatory factor IRF3. Also disrupts the association of IRF3 with CREBBP. Interacts with host mitochondrial-associated membrane (MAM) MAVS and prevents the interaction with RIGI. Interacts with TRIM25 to suppress TRIM25-mediated RIGI ubiquitination and thereby RIGI-MAVS interaction. Together with NS2, participates in the proteasomal degradation of host STAT2, IRF3, IRF7, TBK1 and RIGI through a NS-degradasome involving CUL2 and Elongin-C. The degradasome requires an intact mitochondrial MAVS. Decreases the levels of host TRAF3 and IKBKE/IKK-epsilon. As functions other than disruptions of the type I IFN-mediated antiviral signaling pathways, induces host SOCS1 and SOCS3 expression. Suppresses premature apoptosis by an NF-kappa-B-dependent, interferon-independent mechanism and thus facilitates virus growth. Additionally, NS1 may serve some inhibitory role in viral transcription and RNA replication. Suppresses proliferation and activation of host CD103+ CD8+ cytotoxic T-lymphocytes and Th17 helper T-lymphocytes. This is Non-structural protein 1 (1C) from Homo sapiens (Human).